Consider the following 78-residue polypeptide: Short neurotoxin 342 (78 aa).

A signal peptide spans 1-21 (MKTLLLTLVVLTIVCLDLGYT). 4 disulfides stabilise this stretch: Cys-24-Cys-43, Cys-38-Cys-57, Cys-59-Cys-70, and Cys-71-Cys-76.

This sequence belongs to the three-finger toxin family. Short-chain subfamily. Type I alpha-neurotoxin sub-subfamily. As to expression, expressed by the venom gland.

It is found in the secreted. In terms of biological role, binds to muscle nicotinic acetylcholine receptor (nAChR) and inhibit acetylcholine from binding to the receptor, thereby impairing neuromuscular transmission. This is Short neurotoxin 342 from Drysdalia coronoides (White-lipped snake).